The chain runs to 474 residues: ATP synthase subunit beta 2 (474 aa).

157 to 164 (GGAGVGKT) is an ATP binding site.

This sequence belongs to the ATPase alpha/beta chains family. In terms of assembly, F-type ATPases have 2 components, CF(1) - the catalytic core - and CF(0) - the membrane proton channel. CF(1) has five subunits: alpha(3), beta(3), gamma(1), delta(1), epsilon(1). CF(0) has three main subunits: a(1), b(2) and c(9-12). The alpha and beta chains form an alternating ring which encloses part of the gamma chain. CF(1) is attached to CF(0) by a central stalk formed by the gamma and epsilon chains, while a peripheral stalk is formed by the delta and b chains.

The protein localises to the cell inner membrane. It carries out the reaction ATP + H2O + 4 H(+)(in) = ADP + phosphate + 5 H(+)(out). In terms of biological role, produces ATP from ADP in the presence of a proton gradient across the membrane. The catalytic sites are hosted primarily by the beta subunits. This chain is ATP synthase subunit beta 2, found in Polaromonas naphthalenivorans (strain CJ2).